Reading from the N-terminus, the 267-residue chain is Cysteine protease avirulence protein AvrPphB (267 aa).

A lipid anchor (N-myristoyl glycine; by host) is attached at Gly63. Residues Cys98, His212, and Asp227 contribute to the active site.

This sequence belongs to the peptidase C58 family. As to quaternary structure, in infected plant cells, the 28 kDa product interacts with PBS1. In terms of processing, autocleaved. This function is essential for myristoylation in infected plant cell and for eliciting the plant hypersensitive response. Myristoylation of 28 kDa product in infected plant cells; it mediates the localization to membranes.

The protein localises to the secreted. It localises to the host membrane. Functionally, cysteine protease avirulence protein, which is essential during infection of plant cells from cultivar-specific of beans and Arabidopsis thaliana. The autocleavage of the protein is required for virulence function. May act by affecting the plant defense system. In plants lacking R3 or RPS5 resistance genes, it probably impairs the plant defense system and leads to the bacteria multiplication. In contrast, in plants containing the R3 or RPS5 protein, it is unable to induce disease symptoms, explaining its avirulence name. The 7 kDa product is required for the type-III translocation from Pseudomonas strains to the plant, but are partially dispensable for effector recognition following in planta expression. In infected plants, it acts by cleaving the PBS1 protein, which leads to resistance or disease, depending on the presence or absence of RPS5, respectively. Targets the Arabidopsis kinases PBS1, BIK1, PBL1, PBL2, PBL3, PBL5, PBL7, PBL9 and PBL11 for cleavage in vitro. Can block recognition of AvrB avirulence factor by plant cells by cleaving Arabidopsis RIPK kinase and suppressing Arabidopsis RPM1 activation. Cannot block AvrRpm1-induced activation of RPM1. The chain is Cysteine protease avirulence protein AvrPphB (avrPph3) from Pseudomonas savastanoi pv. phaseolicola (Pseudomonas syringae pv. phaseolicola).